The sequence spans 316 residues: ATP synthase gamma chain (316 aa).

It belongs to the ATPase gamma chain family. As to quaternary structure, F-type ATPases have 2 components, CF(1) - the catalytic core - and CF(0) - the membrane proton channel. CF(1) has five subunits: alpha(3), beta(3), gamma(1), delta(1), epsilon(1). CF(0) has three main subunits: a, b and c.

It is found in the cellular thylakoid membrane. Its function is as follows. Produces ATP from ADP in the presence of a proton gradient across the membrane. The gamma chain is believed to be important in regulating ATPase activity and the flow of protons through the CF(0) complex. The protein is ATP synthase gamma chain of Prochlorococcus marinus (strain AS9601).